We begin with the raw amino-acid sequence, 238 residues long: Probable transcriptional regulatory protein SAB0618 (238 aa).

This sequence belongs to the TACO1 family. YeeN subfamily.

The protein localises to the cytoplasm. In Staphylococcus aureus (strain bovine RF122 / ET3-1), this protein is Probable transcriptional regulatory protein SAB0618.